Here is a 464-residue protein sequence, read N- to C-terminus: Geranylgeranyl diphosphate reductase, chloroplastic (464 aa).

A chloroplast-targeting transit peptide spans 1-54; it reads MASIALKTFTGLRQSSPENNSITLSKSLPFTQTHRRLRINASKSSPRVNGRNLR.

It belongs to the geranylgeranyl reductase family. ChlP subfamily.

The protein resides in the plastid. It is found in the chloroplast. It catalyses the reaction phytyl diphosphate + 3 NADP(+) = geranylgeranyl diphosphate + 3 NADPH + 3 H(+). It functions in the pathway porphyrin-containing compound metabolism; chlorophyll biosynthesis. It participates in cofactor biosynthesis; tocopherol biosynthesis. In terms of biological role, catalyzes the reduction of geranylgeranyl diphosphate to phytyl diphosphate, providing phytol for both tocopherol and chlorophyll synthesis. This Nicotiana tabacum (Common tobacco) protein is Geranylgeranyl diphosphate reductase, chloroplastic (CHLP).